A 174-amino-acid polypeptide reads, in one-letter code: uncharacterized protein (174 aa).

A helical membrane pass occupies residues 7-27 (LIILAIFTLWVGGFGYYLYLI).

The protein resides in the membrane. This is an uncharacterized protein from Rickettsia prowazekii (strain Madrid E).